A 166-amino-acid chain; its full sequence is D-aminoacyl-tRNA deacylase (166 aa).

Positions 142–143 (GP) match the Gly-cisPro motif, important for rejection of L-amino acids motif.

It belongs to the DTD family. In terms of assembly, homodimer.

It is found in the cytoplasm. It carries out the reaction glycyl-tRNA(Ala) + H2O = tRNA(Ala) + glycine + H(+). The enzyme catalyses a D-aminoacyl-tRNA + H2O = a tRNA + a D-alpha-amino acid + H(+). Functionally, an aminoacyl-tRNA editing enzyme that deacylates mischarged D-aminoacyl-tRNAs. Also deacylates mischarged glycyl-tRNA(Ala), protecting cells against glycine mischarging by AlaRS. Acts via tRNA-based rather than protein-based catalysis; rejects L-amino acids rather than detecting D-amino acids in the active site. By recycling D-aminoacyl-tRNA to D-amino acids and free tRNA molecules, this enzyme counteracts the toxicity associated with the formation of D-aminoacyl-tRNA entities in vivo and helps enforce protein L-homochirality. In Ralstonia nicotianae (strain ATCC BAA-1114 / GMI1000) (Ralstonia solanacearum), this protein is D-aminoacyl-tRNA deacylase.